Here is a 220-residue protein sequence, read N- to C-terminus: LHFPL tetraspan subfamily member 1 protein (220 aa).

Residues 1-20 form the signal peptide; the sequence is MRSSLTMVGTLWAFLSLVTA. The next 2 helical transmembrane spans lie at 86–106 and 122–142; these read VVTGAGCALLLLVALAAVLGC and AAQFVGGLLISSGCALYPLGW. Residue Asn153 is glycosylated (N-linked (GlcNAc...) asparagine). Residues 165-185 traverse the membrane as a helical segment; the sequence is LGWAYYCAGGGAAAAMLICTW.

It belongs to the LHFP family. In terms of tissue distribution, widely expressed. Expressed at high levels in lung, thymus, skeletal muscle, colon and ovary.

The protein resides in the membrane. The protein is LHFPL tetraspan subfamily member 1 protein of Homo sapiens (Human).